The sequence spans 137 residues: Urease subunit beta (137 aa).

The disordered stretch occupies residues 118-137; sequence IIAEENKVSENANKESGYNR. Residues 126 to 137 show a composition bias toward polar residues; it reads SENANKESGYNR.

It belongs to the urease beta subunit family. As to quaternary structure, heterotrimer of UreA (gamma), UreB (beta) and UreC (alpha) subunits. Three heterotrimers associate to form the active enzyme.

Its subcellular location is the cytoplasm. The catalysed reaction is urea + 2 H2O + H(+) = hydrogencarbonate + 2 NH4(+). Its pathway is nitrogen metabolism; urea degradation; CO(2) and NH(3) from urea (urease route): step 1/1. This Staphylococcus xylosus protein is Urease subunit beta.